A 198-amino-acid chain; its full sequence is Carnitine operon protein CaiE (198 aa).

The tract at residues valine 179 to glutamine 198 is disordered. A compositionally biased stretch (basic and acidic residues) spans glutamate 180–glutamine 198.

This sequence belongs to the transferase hexapeptide repeat family.

It participates in amine and polyamine metabolism; carnitine metabolism. In terms of biological role, overproduction of CaiE stimulates the activity of CaiB and CaiD. The chain is Carnitine operon protein CaiE from Salmonella typhi.